Reading from the N-terminus, the 114-residue chain is Small ribosomal subunit protein eS25 (114 aa).

Residues 1 to 33 (MAPKKDKAPPPSSKPAKSGGKQKKKKWSKGKQK) form a disordered region. Residues 20 to 30 (GKQKKKKWSKG) show a composition bias toward basic residues.

It belongs to the eukaryotic ribosomal protein eS25 family.

In Amaranthus cruentus (Purple amaranth), this protein is Small ribosomal subunit protein eS25 (RPS25).